Reading from the N-terminus, the 649-residue chain is Acid beta-fructofuranosidase (649 aa).

Residues 1 to 22 lie on the Cytoplasmic side of the membrane; sequence MEHHKPLLPTSSHAAPTSSTRK. Residues 1-101 constitute a propeptide, removed in mature form; that stretch reads MEHHKPLLPT…NLLFAGEGGA (101 aa). The chain crosses the membrane as a helical; Signal-anchor for type II membrane protein span at residues 23-43; that stretch reads DLLFVLCGLLFLSSLVAYGGY. The Lumenal portion of the chain corresponds to 44–649; that stretch reads RASGVPHAHL…PFPFNPDQKS (606 aa). Residues 52-75 form a disordered region; it reads HLSSPTSNHQQDHQSPTSLPSSKW. Over residues 54 to 72 the composition is skewed to polar residues; it reads SSPTSNHQQDHQSPTSLPS. Substrate-binding positions include 127–130, Gln146, Trp154, and 189–190; these read WMND and WT. Asp130 is an active-site residue. N-linked (GlcNAc...) (complex) asparagine glycosylation occurs at Asn210. 253–254 contacts substrate; the sequence is RD. Asn275 carries an N-linked (GlcNAc...) (complex) asparagine glycan. Residues Glu308 and Asp341 each contribute to the substrate site. A disulfide bond links Cys498 and Cys546. A glycan (N-linked (GlcNAc...) (high mannose) asparagine) is linked at Asn618.

It belongs to the glycosyl hydrolase 32 family. As to quaternary structure, present in two forms, a 70 kDa monomer and a heterodimer of the 30 kDa and 38 kDa subunits. The ratio of the levels of the two forms within cells appears to be regulated developmentally.

It is found in the membrane. The protein resides in the vacuole lumen. The enzyme catalyses Hydrolysis of terminal non-reducing beta-D-fructofuranoside residues in beta-D-fructofuranosides.. It participates in glycan biosynthesis; sucrose metabolism. In terms of biological role, possible role in the continued mobilization of sucrose to sink organs. This chain is Acid beta-fructofuranosidase (INVA), found in Vigna radiata var. radiata (Mung bean).